Here is a 99-residue protein sequence, read N- to C-terminus: UPF0729 protein CG18508 (99 aa).

The segment at 60–99 (PGGKKTENVSDDDAEESENPPLNATAMAAETEVDESKKEI) is disordered. A compositionally biased stretch (acidic residues) spans 68–77 (VSDDDAEESE). Position 69 is a phosphoserine (S69).

It belongs to the UPF0729 family.

In Drosophila melanogaster (Fruit fly), this protein is UPF0729 protein CG18508.